A 179-amino-acid polypeptide reads, in one-letter code: Inorganic pyrophosphatase (179 aa).

Substrate contacts are provided by Lys30, Arg44, and Tyr56. Mg(2+) is bound by residues Asp66, Asp71, and Asp103. Tyr142 contacts substrate.

Belongs to the PPase family. In terms of assembly, homohexamer. The cofactor is Mg(2+).

It is found in the cytoplasm. It catalyses the reaction diphosphate + H2O = 2 phosphate + H(+). In terms of biological role, catalyzes the hydrolysis of inorganic pyrophosphate (PPi) forming two phosphate ions. This chain is Inorganic pyrophosphatase, found in Rhodospirillum rubrum (strain ATCC 11170 / ATH 1.1.1 / DSM 467 / LMG 4362 / NCIMB 8255 / S1).